Consider the following 129-residue polypeptide: Follitropin subunit beta (129 aa).

Residues 1 to 20 (MKTVQFCFLFCCWKAICCNS) form the signal peptide. Disulfide bonds link cysteine 21-cysteine 69, cysteine 35-cysteine 84, cysteine 38-cysteine 122, cysteine 46-cysteine 100, cysteine 50-cysteine 102, and cysteine 105-cysteine 112. Asparagine 25 and asparagine 42 each carry an N-linked (GlcNAc...) asparagine glycan.

It belongs to the glycoprotein hormones subunit beta family. As to quaternary structure, heterodimer. The active follitropin is a heterodimer composed of an alpha chain/CGA shared with other hormones and a unique beta chain/FSHB shown here.

The protein localises to the secreted. Functionally, together with the alpha chain CGA constitutes follitropin, the follicle-stimulating hormone, and provides its biological specificity to the hormone heterodimer. Binds FSHR, a G protein-coupled receptor, on target cells to activate downstream signaling pathways. Follitropin is involved in follicle development and spermatogenesis in reproductive organs. The sequence is that of Follitropin subunit beta (FSHB) from Saimiri boliviensis boliviensis (Bolivian squirrel monkey).